A 2144-amino-acid polypeptide reads, in one-letter code: Polyketide synthase-like protein Preu9 (2144 aa).

In terms of domain architecture, Ketosynthase family 3 (KS3) spans 1 to 250 (MYALHLAVNA…GANAHCIIDH (250 aa)). The disordered stretch occupies residues 276–325 (QNGHLNEFAANGTTNAPSRDHRNGITDGRADGNTNGHPNANGDVGGNPIN). Positions 293–305 (SRDHRNGITDGRA) are enriched in basic and acidic residues. A malonyl-CoA:ACP transacylase (MAT) region spans residues 435–738 (FVFTGQGAQW…KSPVEQILKS (304 aa)). An N-terminal hotdog fold region spans residues 827 to 965 (HDLLGSKVVG…GCVKLIIKSS (139 aa)). The tract at residues 827 to 1137 (HDLLGSKVVG…ERLRCVSYSR (311 aa)) is dehydratase (DH) domain. Positions 827-1141 (HDLLGSKVVG…CVSYSRISSD (315 aa)) constitute a PKS/mFAS DH domain. H859 (proton acceptor; for dehydratase activity) is an active-site residue. The tract at residues 979-1141 (TLRPVDVRAW…CVSYSRISSD (163 aa)) is C-terminal hotdog fold. D1050 (proton donor; for dehydratase activity) is an active-site residue. The methyltransferase (MT) domain stretch occupies residues 1305–1494 (TGIYPQLHRI…GLDVVLDDFP (190 aa)). The segment at 1731 to 2042 (GVPNSLCFAS…LANMIGKLVV (312 aa)) is enoyl reductase (ER) domain.

Functionally, polyketide synthase-like protein that lacks important domains such as carrier domain and does probably not function as a polyketide synthase. This chain is Polyketide synthase-like protein Preu9, found in Preussia isomera (Coprophilous fungus).